Consider the following 161-residue polypeptide: Anthrone oxygenase tpcL (161 aa).

Asn-4 carries N-linked (GlcNAc...) asparagine glycosylation. A run of 4 helical transmembrane segments spans residues 15 to 35 (VITGSFLSGLMMGLSVVDIPV), 56 to 74 (IGHKMMPSLAVTTCLLYGY), 87 to 107 (LPHIIAAVTTISMVPFTWLVM), and 136 to 155 (WAQLHAVRSLFPLMGSVLGL).

The protein belongs to the anthrone oxygenase family. In terms of tissue distribution, specifically expressed in conidia.

Its subcellular location is the membrane. It carries out the reaction emodin anthrone + O2 = emodin + H2O + H(+). The protein operates within secondary metabolite biosynthesis. Anthrone oxygenase; part of the gene cluster that mediates the biosynthesis of trypacidin, a mycotoxin with antiprotozoal activity and that plays a role in the infection process. The pathway begins with the synthesis of atrochrysone thioester by the polyketide synthase (PKS) tpcC. The atrochrysone carboxyl ACP thioesterase tpcB then breaks the thioester bond and releases the atrochrysone carboxylic acid from tpcC. The decarboxylase tpcK converts atrochrysone carboxylic acid to atrochrysone which is further reduced into emodin anthrone. The next step is performed by the emodin anthrone oxygenase tpcL that catalyzes the oxidation of emodinanthrone to emodin. Emodin O-methyltransferase encoded by tpcA catalyzes methylation of the 8-hydroxy group of emodin to form questin. Ring cleavage of questin by questin oxidase tpcI leads to desmethylsulochrin via several intermediates including questin epoxide. Another methylation step catalyzed by tpcM leads to the formation of sulochrin which is further converted to monomethylsulfochrin by tpcH. Finally, the tpcJ catalyzes the conversion of monomethylsulfochrin to trypacidin. Trypacidin is toxic for human pulmonary and bronchial epithelial cells by initiating the intracellular formation of nitric oxide (NO) and hydrogen peroxide (H(2)O(2)), thus triggering host necrotic cell death. The trypacidin pathway is also able to produce endocrocin via a distinct route from the endocrocin Enc pathway. This chain is Anthrone oxygenase tpcL, found in Aspergillus fumigatus (strain ATCC MYA-4609 / CBS 101355 / FGSC A1100 / Af293) (Neosartorya fumigata).